Reading from the N-terminus, the 253-residue chain is MGQCGITSSKTVLVFLNLIFWGAAGILCYVGAYVFITYDDYDHFFEDVYTLIPAVVIIAVGALLFIIGLIGCCATIRESRCGLATFVIILLLVFVTEVVVVVLGYVYRAKVENEVDRSIQKVYKTYNGTNPDAASRAIDYVQRQLHCCGIHNYSDWENTDWFKETKNQSVPLSCCRETASSCNGSLANPSDLYAEGCEALVVKKLQEIMMHVIWAALAFAAIQLLGMLCACIVLCRRSRDPAYELLITGGAYA.

Residues Met-1–Thr-11 are Cytoplasmic-facing. The chain crosses the membrane as a helical span at residues Val-12 to Ala-32. The Extracellular segment spans residues Tyr-33 to Thr-50. A helical transmembrane segment spans residues Leu-51–Gly-71. Residues Cys-72–Thr-85 are Cytoplasmic-facing. The chain crosses the membrane as a helical span at residues Phe-86–Val-106. Topologically, residues Tyr-107–Val-212 are extracellular. Residues Asn-127, Asn-152, Asn-167, and Asn-183 are each glycosylated (N-linked (GlcNAc...) asparagine). The helical transmembrane segment at Ile-213–Val-233 threads the bilayer. At Leu-234–Ala-253 the chain is on the cytoplasmic side.

The protein belongs to the tetraspanin (TM4SF) family. As to quaternary structure, interacts with claudin-11/CLDN11 and integrins.

The protein localises to the membrane. Its function is as follows. Regulates the proliferation and migration of oligodendrocytes, a process essential for normal myelination and repair. This chain is Tetraspanin-3 (TSPAN3), found in Bos taurus (Bovine).